The following is a 560-amino-acid chain: Zinc finger protein 250 (560 aa).

Residues 22-93 enclose the KRAB domain; that stretch reads LTFEDVAVLL…DRKGAKKSQG (72 aa). Glycyl lysine isopeptide (Lys-Gly) (interchain with G-Cter in SUMO2) cross-links involve residues lysine 125, lysine 136, lysine 148, and lysine 162. The segment at 199–221 adopts a C2H2-type 1 zinc-finger fold; that stretch reads YMCVECGKCFGRSSHLLQHQRIH. Residue lysine 225 forms a Glycyl lysine isopeptide (Lys-Gly) (interchain with G-Cter in SUMO2) linkage. 7 C2H2-type zinc fingers span residues 227-249, 255-277, 283-305, 311-333, 339-361, 367-389, and 395-417; these read YVCS…RRIH, YECN…HKIH, HECL…QRIH, YVCP…QRVH, HRCN…QRIH, YTCS…HNVH, and YECS…ERIH. Residue lysine 421 forms a Glycyl lysine isopeptide (Lys-Gly) (interchain with G-Cter in SUMO2) linkage. 5 consecutive C2H2-type zinc fingers follow at residues 423–445, 451–473, 479–501, 507–529, and 535–557; these read YACY…QRVH, YVCG…ERIH, FQCT…LRTH, YECN…QRIH, and YECG…QKVH.

It belongs to the krueppel C2H2-type zinc-finger protein family.

Its subcellular location is the nucleus. In terms of biological role, may be involved in transcriptional regulation. The chain is Zinc finger protein 250 (ZNF250) from Homo sapiens (Human).